Reading from the N-terminus, the 414-residue chain is Esterase FrsA (414 aa).

It belongs to the FrsA family.

It carries out the reaction a carboxylic ester + H2O = an alcohol + a carboxylate + H(+). Its function is as follows. Catalyzes the hydrolysis of esters. This Salmonella typhi protein is Esterase FrsA.